A 549-amino-acid chain; its full sequence is Cilia- and flagella-associated protein 45 (549 aa).

The disordered stretch occupies residues 1–27; it reads MPLSTAGVLSSASTASNRSRNRPRYRT. Coiled coils occupy residues 119-232 and 259-393; these read KEEL…MMEV and IVEQ…KRNQ. The disordered stretch occupies residues 391–416; sequence RNQEVADREWRRKEKENAQKKMETEA.

It belongs to the CFAP45 family. Microtubule inner protein component of sperm flagellar doublet microtubules. Interacts with AK8; dimerization with AK8 may create a cavity at the interface of the dimer that can accommodate AMP. Interacts with CFAP52. Interacts with ENKUR. Directly interacts with DNALI1. Interacts with DNAH11. Interacts with DNAI1. In terms of tissue distribution, expressed in trachea multiciliated cells.

It is found in the cytoplasm. It localises to the cytoskeleton. The protein localises to the cilium axoneme. The protein resides in the flagellum axoneme. Its subcellular location is the cell projection. It is found in the cilium. It localises to the flagellum. Functionally, microtubule inner protein (MIP) part of the dynein-decorated doublet microtubules (DMTs) in cilia axoneme, which is required for motile cilia beating. It is an AMP-binding protein that may facilitate dynein ATPase-dependent ciliary and flagellar beating via adenine nucleotide homeostasis. May function as a donor of AMP to AK8 and hence promote ADP production. The polypeptide is Cilia- and flagella-associated protein 45 (Bos taurus (Bovine)).